A 347-amino-acid polypeptide reads, in one-letter code: Holliday junction branch migration complex subunit RuvB (347 aa).

The interval 1–186 (MKDENSISFL…FGITARFELY (186 aa)) is large ATPase domain (RuvB-L). ATP contacts are provided by residues leucine 25, arginine 26, glycine 67, lysine 70, threonine 71, threonine 72, 133-135 (EDY), arginine 176, tyrosine 186, and arginine 223. Threonine 71 lines the Mg(2+) pocket. The interval 187 to 257 (SEIELVEIIK…IVSIGLEMLR (71 aa)) is small ATPAse domain (RuvB-S). The head domain (RuvB-H) stretch occupies residues 260–347 (GEGLDEQDRN…GLNENQRVSF (88 aa)). DNA is bound by residues arginine 315 and arginine 320.

The protein belongs to the RuvB family. As to quaternary structure, homohexamer. Forms an RuvA(8)-RuvB(12)-Holliday junction (HJ) complex. HJ DNA is sandwiched between 2 RuvA tetramers; dsDNA enters through RuvA and exits via RuvB. An RuvB hexamer assembles on each DNA strand where it exits the tetramer. Each RuvB hexamer is contacted by two RuvA subunits (via domain III) on 2 adjacent RuvB subunits; this complex drives branch migration. In the full resolvosome a probable DNA-RuvA(4)-RuvB(12)-RuvC(2) complex forms which resolves the HJ.

Its subcellular location is the cytoplasm. It catalyses the reaction ATP + H2O = ADP + phosphate + H(+). In terms of biological role, the RuvA-RuvB-RuvC complex processes Holliday junction (HJ) DNA during genetic recombination and DNA repair, while the RuvA-RuvB complex plays an important role in the rescue of blocked DNA replication forks via replication fork reversal (RFR). RuvA specifically binds to HJ cruciform DNA, conferring on it an open structure. The RuvB hexamer acts as an ATP-dependent pump, pulling dsDNA into and through the RuvAB complex. RuvB forms 2 homohexamers on either side of HJ DNA bound by 1 or 2 RuvA tetramers; 4 subunits per hexamer contact DNA at a time. Coordinated motions by a converter formed by DNA-disengaged RuvB subunits stimulates ATP hydrolysis and nucleotide exchange. Immobilization of the converter enables RuvB to convert the ATP-contained energy into a lever motion, pulling 2 nucleotides of DNA out of the RuvA tetramer per ATP hydrolyzed, thus driving DNA branch migration. The RuvB motors rotate together with the DNA substrate, which together with the progressing nucleotide cycle form the mechanistic basis for DNA recombination by continuous HJ branch migration. Branch migration allows RuvC to scan DNA until it finds its consensus sequence, where it cleaves and resolves cruciform DNA. The chain is Holliday junction branch migration complex subunit RuvB from Borreliella burgdorferi (strain ATCC 35210 / DSM 4680 / CIP 102532 / B31) (Borrelia burgdorferi).